A 140-amino-acid chain; its full sequence is Nucleoside diphosphate kinase (140 aa).

ATP contacts are provided by lysine 11, phenylalanine 59, arginine 87, threonine 93, arginine 104, and asparagine 114. The active-site Pros-phosphohistidine intermediate is the histidine 117.

This sequence belongs to the NDK family. Homotetramer. It depends on Mg(2+) as a cofactor.

The protein resides in the cytoplasm. It carries out the reaction a 2'-deoxyribonucleoside 5'-diphosphate + ATP = a 2'-deoxyribonucleoside 5'-triphosphate + ADP. The catalysed reaction is a ribonucleoside 5'-diphosphate + ATP = a ribonucleoside 5'-triphosphate + ADP. Its function is as follows. Major role in the synthesis of nucleoside triphosphates other than ATP. The ATP gamma phosphate is transferred to the NDP beta phosphate via a ping-pong mechanism, using a phosphorylated active-site intermediate. In Sphingopyxis alaskensis (strain DSM 13593 / LMG 18877 / RB2256) (Sphingomonas alaskensis), this protein is Nucleoside diphosphate kinase.